We begin with the raw amino-acid sequence, 104 residues long: Integration host factor subunit beta (104 aa).

Belongs to the bacterial histone-like protein family. Heterodimer of an alpha and a beta chain.

In terms of biological role, this protein is one of the two subunits of integration host factor, a specific DNA-binding protein that functions in genetic recombination as well as in transcriptional and translational control. In Xylella fastidiosa (strain M23), this protein is Integration host factor subunit beta.